The chain runs to 287 residues: Polyamine aminopropyltransferase (287 aa).

The region spanning Gly-9–Ile-242 is the PABS domain. Position 36 (Gln-36) interacts with S-methyl-5'-thioadenosine. Residues His-67 and Asp-91 each coordinate spermidine. S-methyl-5'-thioadenosine contacts are provided by residues Glu-111 and Asn-143–Gly-144. Asp-162 acts as the Proton acceptor in catalysis. Pro-169 is a binding site for S-methyl-5'-thioadenosine.

The protein belongs to the spermidine/spermine synthase family. Homodimer or homotetramer.

It localises to the cytoplasm. The enzyme catalyses S-adenosyl 3-(methylsulfanyl)propylamine + putrescine = S-methyl-5'-thioadenosine + spermidine + H(+). It participates in amine and polyamine biosynthesis; spermidine biosynthesis; spermidine from putrescine: step 1/1. Catalyzes the irreversible transfer of a propylamine group from the amino donor S-adenosylmethioninamine (decarboxy-AdoMet) to putrescine (1,4-diaminobutane) to yield spermidine. In Prochlorococcus marinus (strain SARG / CCMP1375 / SS120), this protein is Polyamine aminopropyltransferase.